A 160-amino-acid polypeptide reads, in one-letter code: Large ribosomal subunit protein bL19 (160 aa).

Composition is skewed to basic and acidic residues over residues 1–15 and 28–39; these read MTED…KEES and ATRETKPKDSPS. The interval 1-44 is disordered; that stretch reads MTEDLKNTSPSKEESNEIEESSKATPKATRETKPKDSPSKTKLS.

This sequence belongs to the bacterial ribosomal protein bL19 family.

Its function is as follows. This protein is located at the 30S-50S ribosomal subunit interface and may play a role in the structure and function of the aminoacyl-tRNA binding site. This chain is Large ribosomal subunit protein bL19, found in Prochlorococcus marinus (strain SARG / CCMP1375 / SS120).